Here is a 425-residue protein sequence, read N- to C-terminus: UDP-N-acetylglucosamine 1-carboxyvinyltransferase (425 aa).

K22 to N23 serves as a coordination point for phosphoenolpyruvate. R91 serves as a coordination point for UDP-N-acetyl-alpha-D-glucosamine. The Proton donor role is filled by C115. Position 115 is a 2-(S-cysteinyl)pyruvic acid O-phosphothioketal (C115). UDP-N-acetyl-alpha-D-glucosamine contacts are provided by residues R120–L124, D309, and I331.

It belongs to the EPSP synthase family. MurA subfamily.

The protein localises to the cytoplasm. It carries out the reaction phosphoenolpyruvate + UDP-N-acetyl-alpha-D-glucosamine = UDP-N-acetyl-3-O-(1-carboxyvinyl)-alpha-D-glucosamine + phosphate. It functions in the pathway cell wall biogenesis; peptidoglycan biosynthesis. Its function is as follows. Cell wall formation. Adds enolpyruvyl to UDP-N-acetylglucosamine. The chain is UDP-N-acetylglucosamine 1-carboxyvinyltransferase from Akkermansia muciniphila (strain ATCC BAA-835 / DSM 22959 / JCM 33894 / BCRC 81048 / CCUG 64013 / CIP 107961 / Muc).